A 555-amino-acid polypeptide reads, in one-letter code: Urocanate hydratase (555 aa).

NAD(+)-binding positions include 51–52 (GG), Q129, 175–177 (GMG), E195, 262–266 (QTSAH), 272–273 (YL), and Y321. C409 is an active-site residue. G491 contributes to the NAD(+) binding site.

It belongs to the urocanase family. It depends on NAD(+) as a cofactor.

It localises to the cytoplasm. It catalyses the reaction 4-imidazolone-5-propanoate = trans-urocanate + H2O. It participates in amino-acid degradation; L-histidine degradation into L-glutamate; N-formimidoyl-L-glutamate from L-histidine: step 2/3. Functionally, catalyzes the conversion of urocanate to 4-imidazolone-5-propionate. This chain is Urocanate hydratase, found in Xanthomonas campestris pv. campestris (strain ATCC 33913 / DSM 3586 / NCPPB 528 / LMG 568 / P 25).